Here is a 569-residue protein sequence, read N- to C-terminus: Arginine--tRNA ligase (569 aa).

The 'HIGH' region signature appears at 128–138 (ANPTGPLHVGH).

This sequence belongs to the class-I aminoacyl-tRNA synthetase family. As to quaternary structure, monomer.

It localises to the cytoplasm. The enzyme catalyses tRNA(Arg) + L-arginine + ATP = L-arginyl-tRNA(Arg) + AMP + diphosphate. The chain is Arginine--tRNA ligase from Paracidovorax citrulli (strain AAC00-1) (Acidovorax citrulli).